Reading from the N-terminus, the 506-residue chain is Probable Xaa-Pro aminopeptidase PADG_06815 (506 aa).

Mn(2+) is bound by residues Asp285, Asp296, Glu433, and Glu471.

Belongs to the peptidase M24B family. Mn(2+) is required as a cofactor.

It carries out the reaction Release of any N-terminal amino acid, including proline, that is linked to proline, even from a dipeptide or tripeptide.. Its function is as follows. Catalyzes the removal of a penultimate prolyl residue from the N-termini of peptides. This chain is Probable Xaa-Pro aminopeptidase PADG_06815, found in Paracoccidioides brasiliensis (strain Pb18).